Here is a 118-residue protein sequence, read N- to C-terminus: NAD(P)H-quinone oxidoreductase subunit M (118 aa).

It belongs to the complex I NdhM subunit family. In terms of assembly, NDH-1 can be composed of about 15 different subunits; different subcomplexes with different compositions have been identified which probably have different functions.

The protein resides in the cellular thylakoid membrane. It carries out the reaction a plastoquinone + NADH + (n+1) H(+)(in) = a plastoquinol + NAD(+) + n H(+)(out). It catalyses the reaction a plastoquinone + NADPH + (n+1) H(+)(in) = a plastoquinol + NADP(+) + n H(+)(out). NDH-1 shuttles electrons from an unknown electron donor, via FMN and iron-sulfur (Fe-S) centers, to quinones in the respiratory and/or the photosynthetic chain. The immediate electron acceptor for the enzyme in this species is believed to be plastoquinone. Couples the redox reaction to proton translocation, and thus conserves the redox energy in a proton gradient. Cyanobacterial NDH-1 also plays a role in inorganic carbon-concentration. The sequence is that of NAD(P)H-quinone oxidoreductase subunit M from Rippkaea orientalis (strain PCC 8801 / RF-1) (Cyanothece sp. (strain PCC 8801)).